An 858-amino-acid chain; its full sequence is DNA mismatch repair protein MutS (858 aa).

Residue glycine 611 to serine 618 participates in ATP binding.

Belongs to the DNA mismatch repair MutS family.

In terms of biological role, this protein is involved in the repair of mismatches in DNA. It is possible that it carries out the mismatch recognition step. This protein has a weak ATPase activity. The chain is DNA mismatch repair protein MutS from Actinobacillus succinogenes (strain ATCC 55618 / DSM 22257 / CCUG 43843 / 130Z).